The primary structure comprises 374 residues: tRNA-specific 2-thiouridylase MnmA (374 aa).

ATP contacts are provided by residues 12–19 and methionine 38; that span reads GMSGGVDS. Residues 98-100 are interaction with target base in tRNA; sequence NPD. Residue cysteine 103 is the Nucleophile of the active site. Cysteine 103 and cysteine 202 are disulfide-bonded. ATP is bound at residue glycine 128. Residues 152–154 are interaction with tRNA; that stretch reads KDQ. The active-site Cysteine persulfide intermediate is cysteine 202. The tract at residues 316–317 is interaction with tRNA; it reads RY.

It belongs to the MnmA/TRMU family.

It localises to the cytoplasm. It carries out the reaction S-sulfanyl-L-cysteinyl-[protein] + uridine(34) in tRNA + AH2 + ATP = 2-thiouridine(34) in tRNA + L-cysteinyl-[protein] + A + AMP + diphosphate + H(+). Functionally, catalyzes the 2-thiolation of uridine at the wobble position (U34) of tRNA, leading to the formation of s(2)U34. This chain is tRNA-specific 2-thiouridylase MnmA, found in Vibrio vulnificus (strain YJ016).